Reading from the N-terminus, the 638-residue chain is 1-deoxy-D-xylulose-5-phosphate synthase (638 aa).

Thiamine diphosphate contacts are provided by residues His78 and 119–121 (GHS). Asp151 serves as a coordination point for Mg(2+). Thiamine diphosphate is bound by residues 152–153 (GA), Asn180, Tyr289, and Glu371. Residue Asn180 coordinates Mg(2+).

This sequence belongs to the transketolase family. DXPS subfamily. In terms of assembly, homodimer. Mg(2+) serves as cofactor. Requires thiamine diphosphate as cofactor.

It catalyses the reaction D-glyceraldehyde 3-phosphate + pyruvate + H(+) = 1-deoxy-D-xylulose 5-phosphate + CO2. The protein operates within metabolic intermediate biosynthesis; 1-deoxy-D-xylulose 5-phosphate biosynthesis; 1-deoxy-D-xylulose 5-phosphate from D-glyceraldehyde 3-phosphate and pyruvate: step 1/1. Its function is as follows. Catalyzes the acyloin condensation reaction between C atoms 2 and 3 of pyruvate and glyceraldehyde 3-phosphate to yield 1-deoxy-D-xylulose-5-phosphate (DXP). In Bartonella bacilliformis (strain ATCC 35685 / KC583 / Herrer 020/F12,63), this protein is 1-deoxy-D-xylulose-5-phosphate synthase.